The chain runs to 239 residues: Probable transcriptional regulatory protein BCG9842_B4761 (239 aa).

The protein belongs to the TACO1 family. YeeN subfamily.

The protein resides in the cytoplasm. The polypeptide is Probable transcriptional regulatory protein BCG9842_B4761 (Bacillus cereus (strain G9842)).